The primary structure comprises 103 residues: Large ribosomal subunit protein bL21 (103 aa).

This sequence belongs to the bacterial ribosomal protein bL21 family. Part of the 50S ribosomal subunit. Contacts protein L20.

Functionally, this protein binds to 23S rRNA in the presence of protein L20. In Polaromonas naphthalenivorans (strain CJ2), this protein is Large ribosomal subunit protein bL21.